The chain runs to 248 residues: Triosephosphate isomerase (248 aa).

Position 9–11 (9–11) interacts with substrate; the sequence is NWK. The Electrophile role is filled by His-94. The Proton acceptor role is filled by Glu-166. Substrate-binding positions include Gly-172, Ser-212, and 233 to 234; that span reads GG.

The protein belongs to the triosephosphate isomerase family. As to quaternary structure, homodimer.

The protein resides in the cytoplasm. It catalyses the reaction D-glyceraldehyde 3-phosphate = dihydroxyacetone phosphate. It participates in carbohydrate biosynthesis; gluconeogenesis. It functions in the pathway carbohydrate degradation; glycolysis; D-glyceraldehyde 3-phosphate from glycerone phosphate: step 1/1. Functionally, involved in the gluconeogenesis. Catalyzes stereospecifically the conversion of dihydroxyacetone phosphate (DHAP) to D-glyceraldehyde-3-phosphate (G3P). The sequence is that of Triosephosphate isomerase from Clostridium beijerinckii (strain ATCC 51743 / NCIMB 8052) (Clostridium acetobutylicum).